Consider the following 356-residue polypeptide: S-adenosylmethionine:tRNA ribosyltransferase-isomerase (356 aa).

This sequence belongs to the QueA family. In terms of assembly, monomer.

The protein resides in the cytoplasm. The catalysed reaction is 7-aminomethyl-7-carbaguanosine(34) in tRNA + S-adenosyl-L-methionine = epoxyqueuosine(34) in tRNA + adenine + L-methionine + 2 H(+). It functions in the pathway tRNA modification; tRNA-queuosine biosynthesis. Functionally, transfers and isomerizes the ribose moiety from AdoMet to the 7-aminomethyl group of 7-deazaguanine (preQ1-tRNA) to give epoxyqueuosine (oQ-tRNA). The protein is S-adenosylmethionine:tRNA ribosyltransferase-isomerase of Escherichia coli O1:K1 / APEC.